We begin with the raw amino-acid sequence, 187 residues long: Ribonuclease M5 (187 aa).

In terms of domain architecture, Toprim spans 5-88 (KEVIVVEGKD…AFLPRKAGVP (84 aa)). 3 residues coordinate Mg(2+): Glu11, Asp57, and Asp59.

The protein belongs to the ribonuclease M5 family. Mg(2+) serves as cofactor.

The protein localises to the cytoplasm. The enzyme catalyses Endonucleolytic cleavage of RNA, removing 21 and 42 nucleotides, respectively, from the 5'- and 3'-termini of a 5S-rRNA precursor.. Its function is as follows. Required for correct processing of both the 5' and 3' ends of 5S rRNA precursor. Cleaves both sides of a double-stranded region yielding mature 5S rRNA in one step. This is Ribonuclease M5 from Lactiplantibacillus plantarum (strain ATCC BAA-793 / NCIMB 8826 / WCFS1) (Lactobacillus plantarum).